A 386-amino-acid chain; its full sequence is GLABROUS1 enhancer-binding protein-like 1 (386 aa).

Disordered regions lie at residues 1-58 (MVTP…KKKK) and 197-314 (ESGE…DDDD). Basic and acidic residues predominate over residues 216–226 (EEIRDNDETAR). Residues 221-285 (NDETARKAQQ…LKEHEEVANT (65 aa)) are a coiled coil. Residues 257-267 (DNNGTTQIAQQ) are compositionally biased toward polar residues. Positions 291 to 300 (NGAAKTTENG) are enriched in low complexity. The tract at residues 354–375 (LSDEWKALCVEERRLNIKKLRF) is non-canonical leucine-zipper.

It belongs to the GeBP family. Homo- and heterodimers. Interacts with GEBP, GPL2 and GPL3. Interacts with GEBP. Expressed in the apical meristem and young leaf primordia. Detected in the vascular tissues of cotyledons and leaves, in hydathodes and at the base of flowers and siliques, but not in roots.

The protein localises to the nucleus. Functionally, probable transcription factor. May play redundant roles with GEBP and GPL2 in cytokinin responses by regulating the transcript levels of type-A ARR response genes. Involved in stress responses. Plays a repressive role in cell expansion by counteracting the positive role of CPR5 in this process, but does not regulate cell proliferation or endoreduplication. In Arabidopsis thaliana (Mouse-ear cress), this protein is GLABROUS1 enhancer-binding protein-like 1.